Here is a 102-residue protein sequence, read N- to C-terminus: Secretoglobin family 1D member (102 aa).

Residues 1–21 form the signal peptide; the sequence is MRLSVTALLVTLALCYYEANA. Asn87 carries an N-linked (GlcNAc...) asparagine glycan.

Belongs to the secretoglobin family. Lipophilin subfamily.

It localises to the secreted. In terms of biological role, may bind androgens and other steroids. May be under transcriptional regulation of steroid hormones. This chain is Secretoglobin family 1D member (SCGB1D), found in Bos taurus (Bovine).